The following is a 358-amino-acid chain: L-tryptophan methyltransferase trpM (358 aa).

Belongs to the methyltransferase superfamily.

It catalyses the reaction L-tryptophan + S-adenosyl-L-methionine = N(alpha)-methyl-L-tryptophan + S-adenosyl-L-homocysteine + H(+). It carries out the reaction N(alpha)-methyl-L-tryptophan + S-adenosyl-L-methionine = N(alpha),N(alpha)-dimethyl-L-tryptophan + S-adenosyl-L-homocysteine + H(+). The catalysed reaction is N(alpha),N(alpha)-dimethyl-L-tryptophan + S-adenosyl-L-methionine = N(alpha),N(alpha),N(alpha)-trimethyl-L-tryptophan + S-adenosyl-L-homocysteine + H(+). In terms of biological role, methyltransferase that catalyzes iterative L-tryptophan N-methylations to produce L-abrine (N-alpha-methyl-L-tryptophan) and N,N-alpha-dimethyl-L-tryptophan. Also catalyzes a third methylation to yield L-hypaphorine (N,N,N-alpha-trimethyl-L-tryptopan), an agonist of the phytohormone indole-3-acetic acid. Can also N-methylate the non-native amino acid substrate 4-hydroxytryptophan, but the ability to incorporate trpM into a functional psilocybin biosynthesis pathway is indeed thwarted by the inability of the L-tryptophan decarboxylase psiD to use N,N-dimethyl-4-hydroxytryptophan as substrate. The sequence is that of L-tryptophan methyltransferase trpM from Psilocybe serbica.